The sequence spans 127 residues: Large ribosomal subunit protein bL17 (127 aa).

It belongs to the bacterial ribosomal protein bL17 family. In terms of assembly, part of the 50S ribosomal subunit. Contacts protein L32.

This is Large ribosomal subunit protein bL17 from Xanthomonas euvesicatoria pv. vesicatoria (strain 85-10) (Xanthomonas campestris pv. vesicatoria).